A 1728-amino-acid chain; its full sequence is Hybrid PKS-NRPS synthetase TAS1 (1728 aa).

A condensation (C) domain region spans residues 153–499 (SPLSKAQMAL…MDPTLLDFKV (347 aa)). The interval 608–1002 (KARAASQPDL…KLHIQGRIGN (395 aa)) is adenylation (A) domain. The region spanning 1141–1219 (MLRRHLTAEV…KQVDCLMGIV (79 aa)) is the Carrier domain. Position 1177 is an O-(pantetheine 4'-phosphoryl)serine (serine 1177). Residues 1225–1256 (LGSEPTGGSSSRSQSRRSAETSSSSTSAPSSV) are disordered. Composition is skewed to low complexity over residues 1226 to 1237 (GSEPTGGSSSRS) and 1244 to 1255 (ETSSSSTSAPSS). The 453-residue stretch at 1262-1714 (RNLYAIVGIS…SDATWFVIST (453 aa)) folds into the Ketosynthase family 3 (KS3) domain. Catalysis depends on for beta-ketoacyl synthase activity residues cysteine 1436, histidine 1579, and asparagine 1633.

This sequence in the N-terminal section; belongs to the NRP synthetase family. The cofactor is pantetheine 4'-phosphate.

It carries out the reaction acetoacetyl-CoA + L-isoleucine + ATP = tenuazonic acid + AMP + diphosphate + CoA + 2 H(+). Its function is as follows. Hybrid PKS-NRPS synthetase that mediates the biosynthesis of the toxin tenuazonic acid (TeA), an inhibitor of protein biosynthesis on ribosomes by suppressing the release of new protein. TAS1 alone is sufficient for TeA synthesis via the condensation of isoleucine (Ile) with acetoacetyl-CoA by the N-terminal NRPS module and subsequent cyclization conducted by the C-terminal KS domain. The sequence is that of Hybrid PKS-NRPS synthetase TAS1 from Pyricularia oryzae (strain 70-15 / ATCC MYA-4617 / FGSC 8958) (Rice blast fungus).